We begin with the raw amino-acid sequence, 262 residues long: Small ribosomal subunit protein eS1 (262 aa).

It belongs to the eukaryotic ribosomal protein eS1 family. In terms of assembly, component of the small ribosomal subunit. Mature ribosomes consist of a small (40S) and a large (60S) subunit. The 40S subunit contains about 33 different proteins and 1 molecule of RNA (18S). The 60S subunit contains about 49 different proteins and 3 molecules of RNA (25S, 5.8S and 5S).

It localises to the cytoplasm. The protein is Small ribosomal subunit protein eS1 of Theileria annulata.